We begin with the raw amino-acid sequence, 145 residues long: 3-hydroxyacyl-[acyl-carrier-protein] dehydratase FabZ (145 aa).

H47 is a catalytic residue.

This sequence belongs to the thioester dehydratase family. FabZ subfamily.

It is found in the cytoplasm. It catalyses the reaction a (3R)-hydroxyacyl-[ACP] = a (2E)-enoyl-[ACP] + H2O. Functionally, involved in unsaturated fatty acids biosynthesis. Catalyzes the dehydration of short chain beta-hydroxyacyl-ACPs and long chain saturated and unsaturated beta-hydroxyacyl-ACPs. This is 3-hydroxyacyl-[acyl-carrier-protein] dehydratase FabZ from Polaromonas sp. (strain JS666 / ATCC BAA-500).